The chain runs to 666 residues: Probable potassium transport system protein Kup (666 aa).

12 helical membrane-spanning segments follow: residues 16–36, 58–78, 100–120, 141–161, 165–185, 221–241, 253–273, 294–314, 343–363, 373–393, 399–419, and 424–444; these read GFIIALGIVYGDIGTSPLYTI, ISLIIWTLTLITTIKYVLIAL, PWLIIPAMIGGATLLSDGALT, IYQNQTNVIITTLVILIVLFG, FGTGFIGKIFGPVMFIWFSFL, IFILGSIFLATTGAEALYSDL, WPFVKMCIVLSYCGQAAWILA, VYLVSLATLAAIIASQALISG, LYIPVINWILFAVTSCTVLAF, YGLAITITMLMTTILLKYYLI, PILAHLVMAFFALVEFIFFLA, and FMHGGYAVVILALAIVFVMFI.

This sequence belongs to the HAK/KUP transporter (TC 2.A.72) family.

It is found in the cell membrane. It carries out the reaction K(+)(in) + H(+)(in) = K(+)(out) + H(+)(out). Transport of potassium into the cell. Likely operates as a K(+):H(+) symporter. This is Probable potassium transport system protein Kup from Streptococcus pyogenes serotype M1.